A 432-amino-acid chain; its full sequence is Putative D-alanyl-D-alanine carboxypeptidase (432 aa).

A helical; Signal-anchor membrane pass occupies residues 7–25; the sequence is ATVLLTFSLSAFAVEYPVL.

The protein belongs to the peptidase S12 family. YfeW subfamily.

Its subcellular location is the cell inner membrane. It catalyses the reaction Preferential cleavage: (Ac)2-L-Lys-D-Ala-|-D-Ala. Also transpeptidation of peptidyl-alanyl moieties that are N-acyl substituents of D-alanine.. In Salmonella choleraesuis (strain SC-B67), this protein is Putative D-alanyl-D-alanine carboxypeptidase.